Consider the following 245-residue polypeptide: Ubiquinone/menaquinone biosynthesis C-methyltransferase UbiE (245 aa).

Residues Thr-71, Asp-92, and 118–119 each bind S-adenosyl-L-methionine; that span reads DA.

The protein belongs to the class I-like SAM-binding methyltransferase superfamily. MenG/UbiE family.

It catalyses the reaction a 2-demethylmenaquinol + S-adenosyl-L-methionine = a menaquinol + S-adenosyl-L-homocysteine + H(+). The enzyme catalyses a 2-methoxy-6-(all-trans-polyprenyl)benzene-1,4-diol + S-adenosyl-L-methionine = a 5-methoxy-2-methyl-3-(all-trans-polyprenyl)benzene-1,4-diol + S-adenosyl-L-homocysteine + H(+). The protein operates within quinol/quinone metabolism; menaquinone biosynthesis; menaquinol from 1,4-dihydroxy-2-naphthoate: step 2/2. Its pathway is cofactor biosynthesis; ubiquinone biosynthesis. Functionally, methyltransferase required for the conversion of demethylmenaquinol (DMKH2) to menaquinol (MKH2) and the conversion of 2-polyprenyl-6-methoxy-1,4-benzoquinol (DDMQH2) to 2-polyprenyl-3-methyl-6-methoxy-1,4-benzoquinol (DMQH2). This chain is Ubiquinone/menaquinone biosynthesis C-methyltransferase UbiE, found in Neisseria meningitidis serogroup A / serotype 4A (strain DSM 15465 / Z2491).